The chain runs to 237 residues: Indole-3-glycerol phosphate synthase (237 aa).

The protein belongs to the TrpC family.

It carries out the reaction 1-(2-carboxyphenylamino)-1-deoxy-D-ribulose 5-phosphate + H(+) = (1S,2R)-1-C-(indol-3-yl)glycerol 3-phosphate + CO2 + H2O. The protein operates within amino-acid biosynthesis; L-tryptophan biosynthesis; L-tryptophan from chorismate: step 4/5. In Thermoplasma volcanium (strain ATCC 51530 / DSM 4299 / JCM 9571 / NBRC 15438 / GSS1), this protein is Indole-3-glycerol phosphate synthase.